Here is a 64-residue protein sequence, read N- to C-terminus: Translational regulator CsrA (64 aa).

Belongs to the CsrA/RsmA family. As to quaternary structure, homodimer; the beta-strands of each monomer intercalate to form a hydrophobic core, while the alpha-helices form wings that extend away from the core.

It is found in the cytoplasm. Functionally, a key translational regulator that binds mRNA to regulate translation initiation and/or mRNA stability. Mediates global changes in gene expression, shifting from rapid growth to stress survival by linking envelope stress, the stringent response and the catabolite repression systems. Usually binds in the 5'-UTR; binding at or near the Shine-Dalgarno sequence prevents ribosome-binding, repressing translation, binding elsewhere in the 5'-UTR can activate translation and/or stabilize the mRNA. Its function is antagonized by small RNA(s). This chain is Translational regulator CsrA, found in Dichelobacter nodosus (strain VCS1703A).